A 447-amino-acid chain; its full sequence is Phosphoglucosamine mutase (447 aa).

Serine 104 (phosphoserine intermediate) is an active-site residue. 4 residues coordinate Mg(2+): serine 104, aspartate 243, aspartate 245, and aspartate 247. Position 104 is a phosphoserine (serine 104).

It belongs to the phosphohexose mutase family. The cofactor is Mg(2+). Activated by phosphorylation.

The enzyme catalyses alpha-D-glucosamine 1-phosphate = D-glucosamine 6-phosphate. Functionally, catalyzes the conversion of glucosamine-6-phosphate to glucosamine-1-phosphate. The polypeptide is Phosphoglucosamine mutase (Corynebacterium diphtheriae (strain ATCC 700971 / NCTC 13129 / Biotype gravis)).